The primary structure comprises 143 residues: Peptide methionine sulfoxide reductase MsrB (143 aa).

Positions 16-139 (DAELRRRLTP…NSAALNFESR (124 aa)) constitute a MsrB domain. Positions 55, 58, 104, and 107 each coordinate Zn(2+). Cysteine 128 acts as the Nucleophile in catalysis.

This sequence belongs to the MsrB Met sulfoxide reductase family. Zn(2+) is required as a cofactor.

It carries out the reaction L-methionyl-[protein] + [thioredoxin]-disulfide + H2O = L-methionyl-(R)-S-oxide-[protein] + [thioredoxin]-dithiol. This chain is Peptide methionine sulfoxide reductase MsrB, found in Burkholderia cenocepacia (strain HI2424).